We begin with the raw amino-acid sequence, 413 residues long: Na(+)-translocating NADH-quinone reductase subunit B (413 aa).

Helical transmembrane passes span 56 to 76, 123 to 143, and 169 to 189; these read MMIL…YNVG, LLGA…GGFW, and IVPP…GVVI. T236 bears the FMN phosphoryl threonine mark. Helical transmembrane passes span 270–290, 297–317, 322–342, 358–378, and 381–401; these read GSIG…IIFG, IVAG…WIGS, LFAM…GMIF, WWYG…NPAY, and GMML…YVVV.

The protein belongs to the NqrB/RnfD family. In terms of assembly, composed of six subunits; NqrA, NqrB, NqrC, NqrD, NqrE and NqrF. Requires FMN as cofactor.

It localises to the cell inner membrane. It carries out the reaction a ubiquinone + n Na(+)(in) + NADH + H(+) = a ubiquinol + n Na(+)(out) + NAD(+). NQR complex catalyzes the reduction of ubiquinone-1 to ubiquinol by two successive reactions, coupled with the transport of Na(+) ions from the cytoplasm to the periplasm. NqrA to NqrE are probably involved in the second step, the conversion of ubisemiquinone to ubiquinol. This chain is Na(+)-translocating NADH-quinone reductase subunit B, found in Yersinia pestis.